Consider the following 274-residue polypeptide: Penicillin-insensitive murein endopeptidase (274 aa).

An N-terminal signal peptide occupies residues 1 to 19; sequence MKKTAIALLAWFVSSASLA. 3 cysteine pairs are disulfide-bonded: cysteine 44–cysteine 265, cysteine 187–cysteine 235, and cysteine 216–cysteine 223. Positions 110, 113, 120, 147, 150, and 211 each coordinate Zn(2+). Residues 225–274 are disordered; sequence DQPLPPPGDGCGAELQSWFEPPKPGTTKPEKKTPPPLPPSCQALLDEHVL.

It belongs to the peptidase M74 family. As to quaternary structure, dimer. Zn(2+) is required as a cofactor.

It localises to the periplasm. In terms of biological role, murein endopeptidase that cleaves the D-alanyl-meso-2,6-diamino-pimelyl amide bond that connects peptidoglycan strands. Likely plays a role in the removal of murein from the sacculus. This is Penicillin-insensitive murein endopeptidase from Salmonella choleraesuis (strain SC-B67).